The chain runs to 744 residues: Dual specificity protein kinase shkD (744 aa).

Residues 1 to 276 (MKRFFSNLFK…SGPPEILPEE (276 aa)) form a disordered region. Composition is skewed to low complexity over residues 25 to 70 (PTTS…NSNQ), 79 to 107 (SPST…SFTP), and 127 to 200 (TSTT…QTAS). Residues 201–210 (VNHTSSDQSL) show a composition bias toward polar residues. The segment covering 211–236 (NAQNVTQTNNNNNNNNNNNNNNNANN) has biased composition (low complexity). Positions 277–534 (IDRTDFLGQG…EILFRLNEIL (258 aa)) constitute a Protein kinase domain. ATP contacts are provided by residues 283 to 291 (LGQGSFGSV) and lysine 304. The active-site Proton acceptor is the aspartate 400. Residues 641–734 (WFHGDIVREQ…LVPCPKFTQE (94 aa)) form the SH2 domain.

It belongs to the protein kinase superfamily. Ser/Thr protein kinase family. SH2 domain-containing protein kinase subfamily.

Its subcellular location is the membrane. The enzyme catalyses L-seryl-[protein] + ATP = O-phospho-L-seryl-[protein] + ADP + H(+). It carries out the reaction L-threonyl-[protein] + ATP = O-phospho-L-threonyl-[protein] + ADP + H(+). Its function is as follows. Required for proper chemotaxis and phagocytosis; proper spatiotemporal control of F-actin levels in chemotaxing cells. Negative regulator of the PI3K (phosphatidylinositol 3 kinase) pathway. Predominantly phosphorylates serines and threonines and tyrosines at a lower level. This Dictyostelium discoideum (Social amoeba) protein is Dual specificity protein kinase shkD (shkD).